Reading from the N-terminus, the 148-residue chain is 3-dehydroquinate dehydratase (148 aa).

Tyrosine 24 acts as the Proton acceptor in catalysis. Residues asparagine 75, histidine 81, and aspartate 88 each coordinate substrate. The active-site Proton donor is the histidine 101. Residues 102–103 and arginine 112 each bind substrate; that span reads LS.

Belongs to the type-II 3-dehydroquinase family. In terms of assembly, homododecamer.

It carries out the reaction 3-dehydroquinate = 3-dehydroshikimate + H2O. It functions in the pathway metabolic intermediate biosynthesis; chorismate biosynthesis; chorismate from D-erythrose 4-phosphate and phosphoenolpyruvate: step 3/7. Its function is as follows. Catalyzes a trans-dehydration via an enolate intermediate. This chain is 3-dehydroquinate dehydratase, found in Bartonella henselae (strain ATCC 49882 / DSM 28221 / CCUG 30454 / Houston 1) (Rochalimaea henselae).